The following is a 349-amino-acid chain: Probable FBD-associated F-box protein At5g38565 (349 aa).

The F-box domain occupies 1 to 47 (MDIFNGLPDDVLVKILSFVPTKVAVSTSILSKRWEFLWMWLPRLDFG). An FBD domain is found at 263–311 (CWNQPISVPECLLESLQIFNLSHYFGKQQDLDFVVYILKNACHLKTATI).

The sequence is that of Probable FBD-associated F-box protein At5g38565 from Arabidopsis thaliana (Mouse-ear cress).